A 287-amino-acid polypeptide reads, in one-letter code: Bifunctional protein FolD (287 aa).

Residues 164–166 (GSS), S189, and I230 each bind NADP(+).

Belongs to the tetrahydrofolate dehydrogenase/cyclohydrolase family. In terms of assembly, homodimer.

The enzyme catalyses (6R)-5,10-methylene-5,6,7,8-tetrahydrofolate + NADP(+) = (6R)-5,10-methenyltetrahydrofolate + NADPH. The catalysed reaction is (6R)-5,10-methenyltetrahydrofolate + H2O = (6R)-10-formyltetrahydrofolate + H(+). It functions in the pathway one-carbon metabolism; tetrahydrofolate interconversion. In terms of biological role, catalyzes the oxidation of 5,10-methylenetetrahydrofolate to 5,10-methenyltetrahydrofolate and then the hydrolysis of 5,10-methenyltetrahydrofolate to 10-formyltetrahydrofolate. The chain is Bifunctional protein FolD from Aliarcobacter butzleri (strain RM4018) (Arcobacter butzleri).